The chain runs to 111 residues: CRIB domain-containing protein RIC2 (111 aa).

The 14-residue stretch at 71–84 (IGFPTDVKHLSHIG) folds into the CRIB domain.

As to quaternary structure, interacts with ARAC11/ROP1. Expressed in roots, leaves, stems, flowers, siliques and pollen.

It is found in the cell membrane. Functionally, functions as a downstream effector of Rho-related GTP binding proteins of the 'Rho of Plants' (ROPs) family. Participates in the propagation of ROP GTPase signals in specific cellular responses. Is involved in pollen tube growth regulation through its interaction with ARAC11/ROP1. This is CRIB domain-containing protein RIC2 (RIC2) from Arabidopsis thaliana (Mouse-ear cress).